A 210-amino-acid polypeptide reads, in one-letter code: Na(+)-translocating NADH-quinone reductase subunit D (210 aa).

Transmembrane regions (helical) follow at residues 11–31 (ILAPVLDNNPIALQVLGVCSA), 42–62 (FVMTIAVMFVTALSNFFVSLI), 72–92 (IIVQMAIIASLVIVVDQVLKA), 103–123 (VFVGLIITNCIVMGRAEAFAM), 131–151 (FIDGLGNGLGYGFVLITVGFF), and 178–198 (NGLMLLAPSAFFLIGFLIWAI).

This sequence belongs to the NqrDE/RnfAE family. In terms of assembly, composed of six subunits; NqrA, NqrB, NqrC, NqrD, NqrE and NqrF.

It localises to the cell inner membrane. It carries out the reaction a ubiquinone + n Na(+)(in) + NADH + H(+) = a ubiquinol + n Na(+)(out) + NAD(+). In terms of biological role, NQR complex catalyzes the reduction of ubiquinone-1 to ubiquinol by two successive reactions, coupled with the transport of Na(+) ions from the cytoplasm to the periplasm. NqrA to NqrE are probably involved in the second step, the conversion of ubisemiquinone to ubiquinol. The sequence is that of Na(+)-translocating NADH-quinone reductase subunit D from Vibrio atlanticus (strain LGP32) (Vibrio splendidus (strain Mel32)).